The following is a 354-amino-acid chain: Protein REDOX 1 (354 aa).

Residue C44 coordinates Zn(2+). Position 45–49 (45–49) interacts with NAD(+); it reads HSDLH. Zn(2+)-binding residues include H66, C97, C100, C103, and C111. NAD(+) contacts are provided by residues 185 to 190, K214, 271 to 273, 295 to 297, and R340; these read GLGGLG, VGA, and SAV.

It belongs to the zinc-containing alcohol dehydrogenase family. It depends on Zn(2+) as a cofactor. Expressed in leaf epidermis.

The catalysed reaction is 3,17-didehydrostemmadenine + NADPH + H2O = (16S)-deshydroxymethyl-stemmadenine + formate + NADP(+). It catalyses the reaction 3,17-didehydrostemmadenine + NADPH + H2O = (16R)-deshydroxymethyl-stemmadenine + formate + NADP(+). It carries out the reaction 17-dehydrostemmadenine + NADP(+) = 3,17-didehydrostemmadenine + NADPH. It functions in the pathway alkaloid biosynthesis. Its function is as follows. Component of iboga and aspidosperma monoterpenoid indole alkaloids (MIAs, e.g. tabersonine and catharanthine) biosynthesis pathway from 19E-geissoschizine. Catalyzes the first oxidation step of the unstable intermediate product resulting from the reaction triggered by the geissoschizine oxidase (GO) in the stemmadenine biosynthesis process from 19E-geissoschizine. The sequence is that of Protein REDOX 1 from Catharanthus roseus (Madagascar periwinkle).